The following is a 356-amino-acid chain: tRNA N6-adenosine threonylcarbamoyltransferase (356 aa).

Fe cation-binding residues include H115 and H119. Residues 138–142, D171, G184, and N283 contribute to the substrate site; that span reads LVSGG. D311 provides a ligand contact to Fe cation.

It belongs to the KAE1 / TsaD family. Fe(2+) serves as cofactor.

Its subcellular location is the cytoplasm. It catalyses the reaction L-threonylcarbamoyladenylate + adenosine(37) in tRNA = N(6)-L-threonylcarbamoyladenosine(37) in tRNA + AMP + H(+). Its function is as follows. Required for the formation of a threonylcarbamoyl group on adenosine at position 37 (t(6)A37) in tRNAs that read codons beginning with adenine. Is involved in the transfer of the threonylcarbamoyl moiety of threonylcarbamoyl-AMP (TC-AMP) to the N6 group of A37, together with TsaE and TsaB. TsaD likely plays a direct catalytic role in this reaction. This chain is tRNA N6-adenosine threonylcarbamoyltransferase, found in Prochlorococcus marinus (strain MIT 9301).